The following is a 376-amino-acid chain: O-demethylpuromycin-O-methyltransferase (376 aa).

A disordered region spans residues 1 to 28 (MAPTEATRGGPADPAPAPEAHRGGHTEH). Residues 19–28 (EAHRGGHTEH) show a composition bias toward basic and acidic residues. Residues aspartate 235 and 261 to 263 (GDF) each bind S-adenosyl-L-methionine. Histidine 281 acts as the Proton acceptor in catalysis.

Belongs to the class I-like SAM-binding methyltransferase superfamily. Cation-independent O-methyltransferase family.

It catalyses the reaction O-demethylpuromycin + S-adenosyl-L-methionine = puromycin + S-adenosyl-L-homocysteine + H(+). The polypeptide is O-demethylpuromycin-O-methyltransferase (dmpM) (Streptomyces alboniger).